The sequence spans 207 residues: Charged multivesicular body protein 3 (207 aa).

Residues 174–207 (QVSSAPLETHQQEEVVQEKQEDSELLDRLKALKS) form a disordered region. Positions 183–207 (HQQEEVVQEKQEDSELLDRLKALKS) form a coiled coil. The segment covering 183–207 (HQQEEVVQEKQEDSELLDRLKALKS) has biased composition (basic and acidic residues).

The protein belongs to the SNF7 family. Probable core component of the endosomal sorting required for transport complex III (ESCRT-III).

The protein resides in the endosome membrane. Probable core component of the endosomal sorting required for transport complex III (ESCRT-III) which is involved in multivesicular bodies (MVBs) formation and sorting of endosomal cargo proteins into MVBs. MVBs contain intraluminal vesicles (ILVs) that are generated by invagination and scission from the limiting membrane of the endosome and are delivered to lysosomes enabling degradation of membrane proteins. The chain is Charged multivesicular body protein 3 (chmp3) from Dictyostelium discoideum (Social amoeba).